Consider the following 541-residue polypeptide: Thioredoxin reductase (541 aa).

FAD-binding positions include 51–52 (PG), 71–74 (DYVK), 87–88 (TC), 92–96 (GCVPK), A161, D357, and 364–366 (ELA). A disulfide bridge connects residues C88 and C93. A loop important for the interaction with TRX1 region spans residues 438-452 (HRQKHIRAQKDEYDL). H509 contacts FAD. H509 acts as the Proton acceptor in catalysis. C535 and C540 are joined by a disulfide.

The protein belongs to the class-I pyridine nucleotide-disulfide oxidoreductase family. As to quaternary structure, homodimer. The cofactor is FAD.

Its subcellular location is the cytoplasm. The catalysed reaction is [thioredoxin]-dithiol + NADP(+) = [thioredoxin]-disulfide + NADPH + H(+). Catalyzes the transfer of electrons from NADPH to thioredoxins TRX1, TRX2 and TRX3, which in turn act as reductants of disulfide containing proteins. Able to reduce nitroglutathione (GSNO), a compound involved in the transport of nitric oxide (NO); however, TRX1 is more efficient in reducing GSNO. Has no catalytic activity towards oxidized glutathione (GSSG). The sequence is that of Thioredoxin reductase from Plasmodium falciparum (isolate FCH-5).